The following is a 715-amino-acid chain: Putative pentatricopeptide repeat-containing protein At3g23330 (715 aa).

13 PPR repeats span residues 38-68 (SHTS…LKSP), 69-103 (PVLA…GRCP), 104-138 (DHNV…GMDC), 139-172 (DLYT…MPQR), 206-240 (DVVS…DLKP), 241-275 (DSFT…GIDS), 276-306 (DVYI…LYCR), 307-341 (DGIS…KVKP), 342-376 (GAVA…GFGS), 377-407 (NIFI…MNVL), 408-442 (DEVS…GVKP), 443-473 (NQVA…MTKV), and 479-509 (ELEH…MCVE). A type E motif region spans residues 514–589 (VWSTLLSSCS…KPACSWIEMK (76 aa)). Positions 590–620 (NKTHGFVSGDRSHPSMDKINEFLKAVMEQME) are type E(+) motif. The interval 621 to 715 (KEGYVADTSG…RGNCSCGDYW (95 aa)) is type DYW motif.

Belongs to the PPR family. PCMP-H subfamily.

The chain is Putative pentatricopeptide repeat-containing protein At3g23330 (PCMP-H32) from Arabidopsis thaliana (Mouse-ear cress).